The primary structure comprises 234 residues: LRP chaperone MESD (234 aa).

A signal peptide spans 1 to 33; sequence MAASRWARKAVVLLCASDLLLLLLLLPPPGSCA. The tract at residues 1–164 is chaperone domain; it reads MAASRWARKA…DRAIFMLRDG (164 aa). Disordered regions lie at residues 31 to 95 and 187 to 234; these read SCAA…DFSK and GQVY…REDL. The span at 54 to 70 shows a compositional bias: basic and acidic residues; the sequence is DIRDYNDADMARLLEQW. Over residues 71 to 80 the composition is skewed to acidic residues; it reads EKDDDIEEGD. Residues 165 to 204 are escort domain; that stretch reads SYAWEIKDFLVGQDRCADVTLEGQVYPGKGGGSKEKNKTK. Basic and acidic residues predominate over residues 196–234; it reads GSKEKNKTKQDKGKKKKEGDLKSRSSKEENRAGNKREDL. The N-linked (GlcNAc...) asparagine glycan is linked to Asn-201. The Prevents secretion from ER motif lies at 231–234; that stretch reads REDL.

The protein belongs to the MESD family. Monomer. Interacts with LRP5; the interaction prevents LRP5 from forming aggregates and chaperones LRP6 to the plasma membrane. Interacts with LRP6; the interaction prevents LRP6 from forming aggregates and chaperones LRP6 to the plasma membrane. Interacts with LRP4; the interaction promotes glycosylation of LRP4 and its cell-surface expression.

The protein resides in the endoplasmic reticulum. Functionally, chaperone specifically assisting the folding of beta-propeller/EGF modules within the family of low-density lipoprotein receptors (LDLRs). Acts as a modulator of the Wnt pathway through chaperoning the coreceptors of the canonical Wnt pathway, LRP5 and LRP6, to the plasma membrane. Essential for specification of embryonic polarity and mesoderm induction. Plays an essential role in neuromuscular junction (NMJ) formation by promoting cell-surface expression of LRP4. May regulate phagocytosis of apoptotic retinal pigment epithelium (RPE) cells. The sequence is that of LRP chaperone MESD from Homo sapiens (Human).